Here is a 505-residue protein sequence, read N- to C-terminus: 2-methylcitrate dehydratase (505 aa).

It belongs to the PrpD family. As to quaternary structure, monomer.

It carries out the reaction (2S,3S)-2-methylcitrate = 2-methyl-cis-aconitate + H2O. The enzyme catalyses citrate = D-threo-isocitrate. The protein operates within organic acid metabolism; propanoate degradation. It functions in the pathway carbohydrate metabolism; tricarboxylic acid cycle; isocitrate from oxaloacetate: step 1/2. Involved in the catabolism of short chain fatty acids (SCFA) via the tricarboxylic acid (TCA)(acetyl degradation route) and via the 2-methylcitrate cycle I (propionate degradation route). Catalyzes the dehydration of 2-methylcitrate (2-MC) to yield the cis isomer of 2-methyl-aconitate. Could also catalyze the dehydration of citrate and the hydration of cis-aconitate. In Mycobacterium tuberculosis (strain ATCC 35801 / TMC 107 / Erdman), this protein is 2-methylcitrate dehydratase.